A 618-amino-acid chain; its full sequence is Dihydroxy-acid dehydratase (618 aa).

Asp81 is a Mg(2+) binding site. Cys122 contributes to the [2Fe-2S] cluster binding site. Residues Asp123 and Lys124 each coordinate Mg(2+). N6-carboxylysine is present on Lys124. Cys195 contacts [2Fe-2S] cluster. Glu490 provides a ligand contact to Mg(2+). The Proton acceptor role is filled by Ser516.

It belongs to the IlvD/Edd family. In terms of assembly, homodimer. It depends on [2Fe-2S] cluster as a cofactor. Requires Mg(2+) as cofactor.

The catalysed reaction is (2R)-2,3-dihydroxy-3-methylbutanoate = 3-methyl-2-oxobutanoate + H2O. It catalyses the reaction (2R,3R)-2,3-dihydroxy-3-methylpentanoate = (S)-3-methyl-2-oxopentanoate + H2O. It functions in the pathway amino-acid biosynthesis; L-isoleucine biosynthesis; L-isoleucine from 2-oxobutanoate: step 3/4. The protein operates within amino-acid biosynthesis; L-valine biosynthesis; L-valine from pyruvate: step 3/4. In terms of biological role, functions in the biosynthesis of branched-chain amino acids. Catalyzes the dehydration of (2R,3R)-2,3-dihydroxy-3-methylpentanoate (2,3-dihydroxy-3-methylvalerate) into 2-oxo-3-methylpentanoate (2-oxo-3-methylvalerate) and of (2R)-2,3-dihydroxy-3-methylbutanoate (2,3-dihydroxyisovalerate) into 2-oxo-3-methylbutanoate (2-oxoisovalerate), the penultimate precursor to L-isoleucine and L-valine, respectively. This Gluconobacter oxydans (strain 621H) (Gluconobacter suboxydans) protein is Dihydroxy-acid dehydratase.